The chain runs to 274 residues: Ribosomal RNA small subunit methyltransferase A (274 aa).

The S-adenosyl-L-methionine site is built by N17, L19, G44, E65, D89, and N111.

This sequence belongs to the class I-like SAM-binding methyltransferase superfamily. rRNA adenine N(6)-methyltransferase family. RsmA subfamily.

Its subcellular location is the cytoplasm. It catalyses the reaction adenosine(1518)/adenosine(1519) in 16S rRNA + 4 S-adenosyl-L-methionine = N(6)-dimethyladenosine(1518)/N(6)-dimethyladenosine(1519) in 16S rRNA + 4 S-adenosyl-L-homocysteine + 4 H(+). Specifically dimethylates two adjacent adenosines (A1518 and A1519) in the loop of a conserved hairpin near the 3'-end of 16S rRNA in the 30S particle. May play a critical role in biogenesis of 30S subunits. In Buchnera aphidicola subsp. Schizaphis graminum (strain Sg), this protein is Ribosomal RNA small subunit methyltransferase A.